The primary structure comprises 223 residues: Triosephosphate isomerase (223 aa).

Residue 10-12 participates in substrate binding; the sequence is NFK. H94 (electrophile) is an active-site residue. E142 (proton acceptor) is an active-site residue. Residues I147, G182, and 203-204 each bind substrate; that span reads AS.

The protein belongs to the triosephosphate isomerase family. As to quaternary structure, homotetramer; dimer of dimers.

It localises to the cytoplasm. It carries out the reaction D-glyceraldehyde 3-phosphate = dihydroxyacetone phosphate. Its pathway is carbohydrate biosynthesis; gluconeogenesis. The protein operates within carbohydrate degradation; glycolysis; D-glyceraldehyde 3-phosphate from glycerone phosphate: step 1/1. Functionally, involved in the gluconeogenesis. Catalyzes stereospecifically the conversion of dihydroxyacetone phosphate (DHAP) to D-glyceraldehyde-3-phosphate (G3P). The protein is Triosephosphate isomerase of Archaeoglobus fulgidus (strain ATCC 49558 / DSM 4304 / JCM 9628 / NBRC 100126 / VC-16).